Here is a 221-residue protein sequence, read N- to C-terminus: Josephin-like protein (221 aa).

Residues 1 to 37 (MESPSARTLGNSLGDDSGNGNENGNGSGNGNTTMMPH) form a disordered region. Residues 9–20 (LGNSLGDDSGNG) are compositionally biased toward low complexity. The Josephin domain maps to 36-214 (PHGIYHERQT…DCKDKSQQRW (179 aa)). C49 acts as the Nucleophile in catalysis. Residue H152 is the Proton acceptor of the active site.

It catalyses the reaction Thiol-dependent hydrolysis of ester, thioester, amide, peptide and isopeptide bonds formed by the C-terminal Gly of ubiquitin (a 76-residue protein attached to proteins as an intracellular targeting signal).. Functionally, may act as a deubiquitinating enzyme. In Drosophila melanogaster (Fruit fly), this protein is Josephin-like protein.